Reading from the N-terminus, the 83-residue chain is Cytochrome c oxidase subunit 12, mitochondrial (83 aa).

The CHCH domain maps to 24-67 (TKHCWQSYVDYHKCVNMKGEDFAPCKVFWKTYNALCPLDWIEKW). The Cx9C motif motif lies at 27 to 37 (CWQSYVDYHKC). 2 disulfide bridges follow: cysteine 27–cysteine 59 and cysteine 37–cysteine 48. A Cx10C motif motif is present at residues 48 to 59 (CKVFWKTYNALC). Position 82 is a phosphoserine (serine 82).

This sequence belongs to the cytochrome c oxidase subunit 6B family. In terms of assembly, component of the cytochrome c oxidase (complex IV, CIV), a multisubunit enzyme composed of 12 subunits. The complex is composed of a catalytic core of 3 subunits COX1, COX2 and COX3, encoded in the mitochondrial DNA, and 9 supernumerary subunits COX4, COX5A (or COX5B), COX6, COX7, COX8, COX9, COX12, COX13 and COX26, which are encoded in the nuclear genome. The complex exists as a monomer or a dimer and forms supercomplexes (SCs) in the inner mitochondrial membrane with a dimer of ubiquinol-cytochrome c oxidoreductase (cytochrome b-c1 complex, complex III, CIII), resulting in 2 different assemblies (supercomplexes III(2)IV and III(2)IV(2)).

It is found in the mitochondrion inner membrane. It participates in energy metabolism; oxidative phosphorylation. Functionally, component of the cytochrome c oxidase, the last enzyme in the mitochondrial electron transport chain which drives oxidative phosphorylation. The respiratory chain contains 3 multisubunit complexes succinate dehydrogenase (complex II, CII), ubiquinol-cytochrome c oxidoreductase (cytochrome b-c1 complex, complex III, CIII) and cytochrome c oxidase (complex IV, CIV), that cooperate to transfer electrons derived from NADH and succinate to molecular oxygen, creating an electrochemical gradient over the inner membrane that drives transmembrane transport and the ATP synthase. Cytochrome c oxidase is the component of the respiratory chain that catalyzes the reduction of oxygen to water. Electrons originating from reduced cytochrome c in the intermembrane space (IMS) are transferred via the dinuclear copper A center (CU(A)) of COX2 and heme A of COX1 to the active site in COX1, a binuclear center (BNC) formed by heme A3 and copper B (CU(B)). The BNC reduces molecular oxygen to 2 water molecules unsing 4 electrons from cytochrome c in the IMS and 4 protons from the mitochondrial matrix. The polypeptide is Cytochrome c oxidase subunit 12, mitochondrial (COX12) (Saccharomyces cerevisiae (strain ATCC 204508 / S288c) (Baker's yeast)).